We begin with the raw amino-acid sequence, 304 residues long: UDP-N-acetylenolpyruvoylglucosamine reductase (304 aa).

Residues 33-213 (IGGPADIMVI…LEITRDLTER (181 aa)) enclose the FAD-binding PCMH-type domain. The active site involves Arg-177. The Proton donor role is filled by Ser-227. The active site involves Glu-297.

Belongs to the MurB family. The cofactor is FAD.

Its subcellular location is the cytoplasm. It catalyses the reaction UDP-N-acetyl-alpha-D-muramate + NADP(+) = UDP-N-acetyl-3-O-(1-carboxyvinyl)-alpha-D-glucosamine + NADPH + H(+). It functions in the pathway cell wall biogenesis; peptidoglycan biosynthesis. Cell wall formation. The chain is UDP-N-acetylenolpyruvoylglucosamine reductase from Alkaliphilus oremlandii (strain OhILAs) (Clostridium oremlandii (strain OhILAs)).